A 303-amino-acid polypeptide reads, in one-letter code: Cytochrome c oxidase subunit 2 (303 aa).

A signal peptide spans 1–25 (MRHSTTLTGCATGAAGLLAATAAAA). 2 helical membrane passes run 60 to 80 (FILV…LYAV) and 104 to 124 (WTIV…PVLF). Residues H217, C252, C256, and H260 each contribute to the Cu cation site.

It belongs to the cytochrome c oxidase subunit 2 family. The cofactor is Cu cation.

The protein resides in the cell membrane. It catalyses the reaction 4 Fe(II)-[cytochrome c] + O2 + 8 H(+)(in) = 4 Fe(III)-[cytochrome c] + 2 H2O + 4 H(+)(out). In terms of biological role, subunits I and II form the functional core of the enzyme complex. Electrons originating in cytochrome c are transferred via heme a and Cu(A) to the binuclear center formed by heme a3 and Cu(B). The sequence is that of Cytochrome c oxidase subunit 2 (ctaC) from Cereibacter sphaeroides (Rhodobacter sphaeroides).